Here is a 502-residue protein sequence, read N- to C-terminus: MFS-type transporeter aprT (502 aa).

Residues 1–38 form a disordered region; the sequence is MASPELASHHSDPSDGEGAPFLPGVDDESPESLNSDIP. 11 helical membrane-spanning segments follow: residues 45 to 65, 114 to 136, 150 to 170, 175 to 195, 214 to 234, 239 to 259, 302 to 322, 336 to 356, 380 to 400, 403 to 423, and 464 to 484; these read HGLI…GPMI, IGYR…GLLA, VGFV…NIFP, WFGA…ALFW, FGIA…FVMK, VPLM…NLLP, VAVI…AFLV, ATLL…FILP, VMLL…NTLI, LLLH…ITGL, and LWIG…ALVL. An N-linked (GlcNAc...) asparagine glycan is attached at asparagine 495.

This sequence belongs to the major facilitator superfamily.

It is found in the cell membrane. MFS-rype transporer; part of the gene cluster that mediates the biosynthesis of the asperipin-2a, a bicyclic peptide that possesses two macrocyclic ether rings consisting of 14- and 17-membered paracyclophans. AprT is likely to be involved in the cellular export of asperipin-2a. This Aspergillus flavus (strain ATCC 200026 / FGSC A1120 / IAM 13836 / NRRL 3357 / JCM 12722 / SRRC 167) protein is MFS-type transporeter aprT.